Reading from the N-terminus, the 440-residue chain is Cell division protein DivIB (440 aa).

The segment covering 1-10 (MMDDKTKNDQ) has biased composition (basic and acidic residues). Disordered regions lie at residues 1–97 (MMDD…DSNI) and 123–154 (QHQS…TQLK). The Cytoplasmic segment spans residues 1 to 174 (MMDDKTKNDQ…RRKRQKRIQY (174 aa)). The span at 12-21 (ESNEDKDELE) shows a compositional bias: acidic residues. Residues 27 to 39 (TSKKRRQRKRSKA) are compositionally biased toward basic residues. Low complexity predominate over residues 78 to 87 (DSASSHANDN). The span at 88–97 (NIDDSTDSNI) shows a compositional bias: acidic residues. Residues 124–134 (HQSAPNEQNSD) show a composition bias toward polar residues. The chain crosses the membrane as a helical span at residues 175–195 (SVITILVLLIAVILIYMFSPL). In terms of domain architecture, POTRA spans 196–264 (SKIAHVNING…NTLNVDITEN (69 aa)). Residues 196–440 (SKIAHVNING…KINKQSSKNN (245 aa)) are Extracellular-facing. The tract at residues 397 to 440 (YRGNTSTQSESDKNVTKSSQEENQAKEELQSVLNKINKQSSKNN) is disordered. A compositionally biased stretch (basic and acidic residues) spans 406 to 425 (ESDKNVTKSSQEENQAKEEL). The segment covering 427–440 (SVLNKINKQSSKNN) has biased composition (polar residues).

The protein belongs to the FtsQ/DivIB family. DivIB subfamily.

Its subcellular location is the cell membrane. Cell division protein that may be involved in stabilizing or promoting the assembly of the division complex. This Staphylococcus aureus (strain MRSA252) protein is Cell division protein DivIB.